The primary structure comprises 311 residues: Fluoride export protein 1 (311 aa).

The Cytoplasmic segment spans residues M1–S6. Residues Y7–L25 traverse the membrane as a helical segment. Topologically, residues N26–P29 are extracellular. Residues G30–C50 form a helical membrane-spanning segment. Residues Q51–T65 lie on the Cytoplasmic side of the membrane. Residues F66–L86 form a helical membrane-spanning segment. Topologically, residues Q87–S106 are extracellular. Residues F107 to W127 form a helical membrane-spanning segment. Topologically, residues G128 to H154 are cytoplasmic. The chain crosses the membrane as a helical span at residues I155–Y175. Topologically, residues T176–G186 are extracellular. Residue N181 is glycosylated (N-linked (GlcNAc...) asparagine). The helical transmembrane segment at I187 to F207 threads the bilayer. The Cytoplasmic segment spans residues L208 to Q212. A helical transmembrane segment spans residues Y213–M233. At Y234–M250 the chain is on the extracellular side. The helical transmembrane segment at Y251 to S268 threads the bilayer. The Cytoplasmic portion of the chain corresponds to N269–R278. A helical transmembrane segment spans residues A279–G299. The Extracellular portion of the chain corresponds to A300–Y311.

Belongs to the fluoride channel Fluc/FEX (TC 1.A.43) family.

It localises to the cell membrane. The enzyme catalyses fluoride(in) = fluoride(out). Functionally, fluoride channel required for the rapid expulsion of cytoplasmic fluoride. The protein is Fluoride export protein 1 (fex1) of Schizosaccharomyces pombe (strain 972 / ATCC 24843) (Fission yeast).